Here is a 561-residue protein sequence, read N- to C-terminus: Nephronectin (561 aa).

The first 19 residues, 1–19 (MAVLLAAVLASSLYLQVAA), serve as a signal peptide directing secretion. One can recognise an EGF-like 1 domain in the interval 52 to 87 (SWGQCQPVCQPQCKHGECVGPNKCKCHPGFAGKTCN). Cystine bridges form between cysteine 56–cysteine 69, cysteine 60–cysteine 75, cysteine 77–cysteine 86, cysteine 93–cysteine 104, cysteine 100–cysteine 113, and cysteine 115–cysteine 127. Positions 89–128 (DLNECGLKPRPCKHRCMNTFGSYKCYCLNGYMLLPDGSCS) constitute an EGF-like 2; calcium-binding domain. An EGF-like 3 domain is found at 132-168 (SCSMANCQYGCDVVKGQVRCQCPSPGLQLAPDGRTCV). Residues 169-213 (DIDECATGRVSCPRFRQCVNTFGSYICKCHTGFDLMYIGGKYQCH) enclose the EGF-like 4; calcium-binding domain. 6 cysteine pairs are disulfide-bonded: cysteine 173–cysteine 186, cysteine 180–cysteine 195, cysteine 197–cysteine 212, cysteine 218–cysteine 231, cysteine 225–cysteine 240, and cysteine 242–cysteine 253. The EGF-like 5; calcium-binding domain maps to 214-254 (DIDECSLGQHQCSSYARCYNIHGSYKCQCRDGYEGDGLNCV). The tract at residues 266–370 (PIHMPERNGT…TSTTTRVITV (105 aa)) is disordered. A compositionally biased stretch (low complexity) spans 307 to 316 (TNRPTSKPTT). A compositionally biased stretch (pro residues) spans 317–348 (RPTPNPTPQPTPPPPPPLPTEPRTTPLPPTPE). Low complexity predominate over residues 352-366 (TRPTTIAPATSTTTR). The short motif at 382-384 (RGD) is the Integrin interaction element. One can recognise an MAM domain in the interval 420–561 (HSCNFDHGLC…DDVSLKRGRC (142 aa)).

It belongs to the nephronectin family. Homodimer and homotrimer. In terms of tissue distribution, expressed in kidney (at protein level).

The protein resides in the secreted. It localises to the extracellular space. Its subcellular location is the extracellular matrix. Functionally, functional ligand of integrin alpha-8/beta-1 in kidney development. Regulates the expression of GDNF with integrin alpha-8/beta-1 which is essential for kidney development. May also play a role in the development and function of various tissues, regulating cell adhesion, spreading and survival through the binding of several integrins. The polypeptide is Nephronectin (Npnt) (Mus musculus (Mouse)).